Consider the following 485-residue polypeptide: Glutamyl-tRNA(Gln) amidotransferase subunit A (485 aa).

Residues lysine 74 and serine 149 each act as charge relay system in the active site. Serine 173 serves as the catalytic Acyl-ester intermediate.

The protein belongs to the amidase family. GatA subfamily. As to quaternary structure, heterotrimer of A, B and C subunits.

It carries out the reaction L-glutamyl-tRNA(Gln) + L-glutamine + ATP + H2O = L-glutaminyl-tRNA(Gln) + L-glutamate + ADP + phosphate + H(+). Its function is as follows. Allows the formation of correctly charged Gln-tRNA(Gln) through the transamidation of misacylated Glu-tRNA(Gln) in organisms which lack glutaminyl-tRNA synthetase. The reaction takes place in the presence of glutamine and ATP through an activated gamma-phospho-Glu-tRNA(Gln). In Janthinobacterium sp. (strain Marseille) (Minibacterium massiliensis), this protein is Glutamyl-tRNA(Gln) amidotransferase subunit A.